We begin with the raw amino-acid sequence, 317 residues long: Ribosomal protein L11 methyltransferase (317 aa).

S-adenosyl-L-methionine contacts are provided by Thr-158, Gly-179, Asp-201, and Asn-244.

Belongs to the methyltransferase superfamily. PrmA family.

The protein localises to the cytoplasm. It catalyses the reaction L-lysyl-[protein] + 3 S-adenosyl-L-methionine = N(6),N(6),N(6)-trimethyl-L-lysyl-[protein] + 3 S-adenosyl-L-homocysteine + 3 H(+). In terms of biological role, methylates ribosomal protein L11. The polypeptide is Ribosomal protein L11 methyltransferase (Streptococcus mutans serotype c (strain ATCC 700610 / UA159)).